A 248-amino-acid chain; its full sequence is Type III pantothenate kinase (248 aa).

Residue 6-13 (DIGNTETK) coordinates ATP. 103 to 106 (GSDR) contacts substrate. Residue Asp-105 is the Proton acceptor of the active site. Asp-124 serves as a coordination point for K(+). Thr-127 is an ATP binding site. Residue Thr-178 participates in substrate binding.

The protein belongs to the type III pantothenate kinase family. Homodimer. The cofactor is NH4(+). K(+) serves as cofactor.

Its subcellular location is the cytoplasm. It catalyses the reaction (R)-pantothenate + ATP = (R)-4'-phosphopantothenate + ADP + H(+). Its pathway is cofactor biosynthesis; coenzyme A biosynthesis; CoA from (R)-pantothenate: step 1/5. Its function is as follows. Catalyzes the phosphorylation of pantothenate (Pan), the first step in CoA biosynthesis. This is Type III pantothenate kinase from Pelagibacter ubique (strain HTCC1062).